Here is a 493-residue protein sequence, read N- to C-terminus: Phospholipid transfer protein (493 aa).

A signal peptide spans 1-17 (MALFGALFLALLAGAHA). N-linked (GlcNAc...) (complex) asparagine glycosylation is present at Asn-64. Asn-94 carries N-linked (GlcNAc...) asparagine glycosylation. The N-linked (GlcNAc...) (complex) asparagine glycan is linked to Asn-117. Asn-143 is a glycosylation site (N-linked (GlcNAc...) asparagine). Cys-146 and Cys-185 are oxidised to a cystine. An N-linked (GlcNAc...) (complex) asparagine glycan is attached at Asn-245. Asn-398 carries an N-linked (GlcNAc...) asparagine glycan.

It belongs to the BPI/LBP/Plunc superfamily. BPI/LBP family. Post-translationally, glycosylation is necessary for secretion and its phospholipid transfer activity. As to expression, widely expressed. Highest level of expression in the ovary, thymus and placenta, with moderate levels found in the pancreas, small intestine, testis, lung and prostrate. Low level expression in the kidney, liver and spleen, with very low levels found in the heart, colon, skeletal muscle, leukocytes and brain. Expressed in the cortical neurons.

Its subcellular location is the secreted. The protein localises to the nucleus. It carries out the reaction a 1,2-diacyl-sn-glycero-3-phosphocholine(in) = a 1,2-diacyl-sn-glycero-3-phosphocholine(out). It catalyses the reaction a 1,2-diacyl-sn-glycero-3-phosphoethanolamine(in) = a 1,2-diacyl-sn-glycero-3-phosphoethanolamine(out). The catalysed reaction is a 1,2-diacyl-sn-glycerol(in) = a 1,2-diacyl-sn-glycerol(out). The enzyme catalyses a 1,2-diacyl-sn-glycero-3-phosphate(in) = a 1,2-diacyl-sn-glycero-3-phosphate(out). It carries out the reaction a sphingomyelin(in) = a sphingomyelin(out). It catalyses the reaction a 1,2-diacyl-sn-glycero-3-phospho-(1'-sn-glycerol)(in) = a 1,2-diacyl-sn-glycero-3-phospho-(1'-sn-glycerol)(out). The catalysed reaction is a 1,2-diacyl-sn-glycero-3-phospho-(1D-myo-inositol)(in) = a 1,2-diacyl-sn-glycero-3-phospho-(1D-myo-inositol)(out). The enzyme catalyses 1-hexadecanoyl-2-(5Z,8Z,11Z,14Z-eicosatetraenoyl)-sn-glycero-3-phosphoethanolamine(in) = 1-hexadecanoyl-2-(5Z,8Z,11Z,14Z-eicosatetraenoyl)-sn-glycero-3-phosphoethanolamine(out). It carries out the reaction N-(hexadecanoyl)-sphing-4-enine-1-phosphocholine(in) = N-(hexadecanoyl)-sphing-4-enine-1-phosphocholine(out). It catalyses the reaction 1,2-dihexadecanoyl-sn-glycero-3-phosphocholine(in) = 1,2-dihexadecanoyl-sn-glycero-3-phosphocholine(out). Its function is as follows. Mediates the transfer of phospholipids and free cholesterol from triglyceride-rich lipoproteins (low density lipoproteins or LDL and very low density lipoproteins or VLDL) into high-density lipoproteins (HDL) as well as the exchange of phospholipids between triglyceride-rich lipoproteins themselves. Facilitates the transfer of a spectrum of different lipid molecules, including diacylglycerol, phosphatidic acid, sphingomyelin, phosphatidylcholine, phosphatidylinositol, phosphatidylglycerol, cerebroside and phosphatidyl ethanolamine. Plays an important role in HDL remodeling which involves modulating the size and composition of HDL. Also plays a key role in the uptake of cholesterol from peripheral cells and tissues that is subsequently transported to the liver for degradation and excretion. Two distinct forms of PLTP exist in plasma: an active form that can transfer phosphatidylcholine from phospholipid vesicles to HDL, and an inactive form that lacks this capability. The polypeptide is Phospholipid transfer protein (PLTP) (Homo sapiens (Human)).